A 1480-amino-acid polypeptide reads, in one-letter code: Cystic fibrosis transmembrane conductance regulator (1480 aa).

Over Met1–Phe77 the chain is Cytoplasmic. Residues Phe78–Gln98 traverse the membrane as a helical segment. Residues Phe81 to Leu365 enclose the ABC transmembrane type-1 1 domain. At Pro99–Tyr122 the chain is on the extracellular side. Residues Leu123–His146 traverse the membrane as a helical segment. The Cytoplasmic segment spans residues His147–Leu195. The helical transmembrane segment at Ala196–Trp216 threads the bilayer. The Extracellular portion of the chain corresponds to Glu217 to Ser222. Residues Ala223 to Met243 form a helical membrane-spanning segment. Over Met244 to Lys298 the chain is Cytoplasmic. The helical transmembrane segment at Ala299–Phe319 threads the bilayer. The Extracellular segment spans residues Leu320–Thr339. Residues Ile340–Val358 traverse the membrane as a helical segment. The Cytoplasmic portion of the chain corresponds to Gln359–Ser858. ATP contacts are provided by residues Trp401, Ser434, Gly458–Thr465, and Gln493. Positions Asn423–Gly646 constitute an ABC transporter 1 domain. Residue Cys524 is the site of S-palmitoyl cysteine attachment. Phosphoserine occurs at positions 549 and 660. Residues Ser654–Glu831 are disordered R region. Ser670 carries the phosphoserine; by PKA modification. Lys688 is covalently cross-linked (Glycyl lysine isopeptide (Lys-Gly) (interchain with G-Cter in ubiquitin)). A phosphoserine mark is found at Ser700 and Ser712. Thr717 carries the phosphothreonine modification. A phosphoserine mark is found at Ser737, Ser753, Ser768, Ser790, Ser795, and Ser813. A helical membrane pass occupies residues Leu859 to Val879. Residues Leu859–Ser1155 enclose the ABC transmembrane type-1 2 domain. Residues Val880–Ile918 are Extracellular-facing. Asn894 and Asn900 each carry an N-linked (GlcNAc...) asparagine glycan. Residues Tyr919–His939 traverse the membrane as a discontinuously helical segment. Over Thr940–Thr990 the chain is Cytoplasmic. The helical transmembrane segment at Ile991–Leu1011 threads the bilayer. At Gln1012 to Pro1013 the chain is on the extracellular side. The chain crosses the membrane as a helical span at residues Tyr1014–Leu1034. Topologically, residues Gln1035–Thr1095 are cytoplasmic. A helical transmembrane segment spans residues Leu1096 to Phe1116. The Extracellular portion of the chain corresponds to Ile1117–Gly1130. A helical transmembrane segment spans residues Ile1131–Ile1151. Over Asp1152–Leu1480 the chain is Cytoplasmic. Residues Met1210 to Pro1443 form the ABC transporter 2 domain. ATP contacts are provided by residues Tyr1219 and Gly1244–Ser1251. An interaction with GORASP2 region spans residues Arg1386–Leu1480. Cys1395 carries S-palmitoyl cysteine lipidation. 2 positions are modified to phosphoserine: Ser1444 and Ser1456. Residues His1452 to Leu1480 are disordered. The segment covering Glu1470–Leu1480 has biased composition (acidic residues). The PDZ-binding signature appears at Thr1478–Leu1480.

Belongs to the ABC transporter superfamily. ABCC family. CFTR transporter (TC 3.A.1.202) subfamily. Monomer; does not require oligomerization for channel activity. May form oligomers in the membrane. Interacts with SLC26A3, SLC26A6 and NHERF1. Interacts with SHANK2. Interacts with MYO6. Interacts (via C-terminus) with GOPC (via PDZ domain); this promotes CFTR internalization and thereby decreases channel activity. Interacts with SLC4A7 through NHERF1. Found in a complex with MYO5B and RAB11A. Interacts with ANO1. Interacts with SLC26A8. Interacts with AHCYL1; the interaction increases CFTR activity. Interacts with CSE1L. The core-glycosylated form interacts with GORASP2 (via PDZ GRASP-type 1 domain) in respone to ER stress. Interacts with MARCHF2; the interaction leads to CFTR ubiqtuitination and degradation. Interacts with ADGRG2. N-glycosylated. In terms of processing, phosphorylated; cAMP treatment promotes phosphorylation and activates the channel. Dephosphorylation decreases the ATPase activity (in vitro). Phosphorylation at PKA sites activates the channel. Phosphorylation at PKC sites enhances the response to phosphorylation by PKA. Phosphorylated by AMPK; this inhibits channel activity. Post-translationally, ubiquitinated, leading to its degradation in the lysosome. Deubiquitination by USP10 in early endosomes enhances its endocytic recycling to the cell membrane. Ubiquitinated by RNF185 during ER stress. Ubiquitinated by MARCHF2.

The protein localises to the apical cell membrane. The protein resides in the early endosome membrane. Its subcellular location is the cell membrane. It localises to the recycling endosome membrane. It is found in the endoplasmic reticulum membrane. The protein localises to the nucleus. It carries out the reaction ATP + H2O + closed Cl(-) channel = ADP + phosphate + open Cl(-) channel.. The catalysed reaction is chloride(in) = chloride(out). The enzyme catalyses hydrogencarbonate(in) = hydrogencarbonate(out). It catalyses the reaction ATP + H2O = ADP + phosphate + H(+). Its function is as follows. Epithelial ion channel that plays an important role in the regulation of epithelial ion and water transport and fluid homeostasis. Mediates the transport of chloride ions across the cell membrane. Possesses an intrinsic ATPase activity and utilizes ATP to gate its channel; the passive flow of anions through the channel is gated by cycles of ATP binding and hydrolysis by the ATP-binding domains. The ion channel is also permeable to HCO(3)(-); selectivity depends on the extracellular chloride concentration. Exerts its function also by modulating the activity of other ion channels and transporters. Contributes to the regulation of the pH and the ion content of the epithelial fluid layer. Modulates the activity of the epithelial sodium channel (ENaC) complex, in part by regulating the cell surface expression of the ENaC complex. May regulate bicarbonate secretion and salvage in epithelial cells by regulating the transporter SLC4A7. Can inhibit the chloride channel activity of ANO1. Plays a role in the chloride and bicarbonate homeostasis during sperm epididymal maturation and capacitation. This Pongo abelii (Sumatran orangutan) protein is Cystic fibrosis transmembrane conductance regulator.